Here is a 195-residue protein sequence, read N- to C-terminus: Probable nicotinate-nucleotide adenylyltransferase (195 aa).

It belongs to the NadD family.

The enzyme catalyses nicotinate beta-D-ribonucleotide + ATP + H(+) = deamido-NAD(+) + diphosphate. It functions in the pathway cofactor biosynthesis; NAD(+) biosynthesis; deamido-NAD(+) from nicotinate D-ribonucleotide: step 1/1. Catalyzes the reversible adenylation of nicotinate mononucleotide (NaMN) to nicotinic acid adenine dinucleotide (NaAD). In Bordetella petrii (strain ATCC BAA-461 / DSM 12804 / CCUG 43448), this protein is Probable nicotinate-nucleotide adenylyltransferase.